A 752-amino-acid polypeptide reads, in one-letter code: Photosystem I P700 chlorophyll a apoprotein A1 (752 aa).

The next 8 helical transmembrane spans lie at 73-96, 159-182, 198-222, 294-312, 349-372, 388-414, 436-458, and 533-551; these read IFSA…FHGA, LYWI…FHYH, MNHH…HVAL, IAHH…GHMY, WHAQ…HHMY, LSLF…IFMV, SIIA…FYIH, and FMVH…LILL. Positions 575 and 584 each coordinate [4Fe-4S] cluster. Transmembrane regions (helical) follow at residues 591-612 and 666-688; these read HVFL…HFSW and ASAY…MFLF. His677 is a binding site for chlorophyll a'. Positions 685 and 693 each coordinate chlorophyll a. Phylloquinone is bound at residue Trp694. Residues 726 to 746 traverse the membrane as a helical segment; it reads AVGLAHYLLGGIGTTWAFFLA.

The protein belongs to the PsaA/PsaB family. The PsaA/B heterodimer binds the P700 chlorophyll special pair and subsequent electron acceptors. PSI consists of a core antenna complex that captures photons, and an electron transfer chain that converts photonic excitation into a charge separation. The eukaryotic PSI reaction center is composed of at least 11 subunits. Requires P700 is a chlorophyll a/chlorophyll a' dimer, A0 is one or more chlorophyll a, A1 is one or both phylloquinones and FX is a shared 4Fe-4S iron-sulfur center. as cofactor.

The protein resides in the plastid. It localises to the chloroplast thylakoid membrane. The catalysed reaction is reduced [plastocyanin] + hnu + oxidized [2Fe-2S]-[ferredoxin] = oxidized [plastocyanin] + reduced [2Fe-2S]-[ferredoxin]. Functionally, psaA and PsaB bind P700, the primary electron donor of photosystem I (PSI), as well as the electron acceptors A0, A1 and FX. PSI is a plastocyanin/cytochrome c6-ferredoxin oxidoreductase, converting photonic excitation into a charge separation, which transfers an electron from the donor P700 chlorophyll pair to the spectroscopically characterized acceptors A0, A1, FX, FA and FB in turn. Oxidized P700 is reduced on the lumenal side of the thylakoid membrane by plastocyanin or cytochrome c6. This is Photosystem I P700 chlorophyll a apoprotein A1 from Phaeodactylum tricornutum (strain CCAP 1055/1).